A 269-amino-acid polypeptide reads, in one-letter code: GTP cyclohydrolase FolE2 2 (269 aa).

This sequence belongs to the GTP cyclohydrolase IV family.

It carries out the reaction GTP + H2O = 7,8-dihydroneopterin 3'-triphosphate + formate + H(+). It functions in the pathway cofactor biosynthesis; 7,8-dihydroneopterin triphosphate biosynthesis; 7,8-dihydroneopterin triphosphate from GTP: step 1/1. Its function is as follows. Converts GTP to 7,8-dihydroneopterin triphosphate. The sequence is that of GTP cyclohydrolase FolE2 2 from Burkholderia lata (strain ATCC 17760 / DSM 23089 / LMG 22485 / NCIMB 9086 / R18194 / 383).